We begin with the raw amino-acid sequence, 453 residues long: Ribosomal protein uS12 methylthiotransferase RimO (453 aa).

Residues 3-118 (KKVGIISLGC…IAKVIEEFYS (116 aa)) form the MTTase N-terminal domain. [4Fe-4S] cluster contacts are provided by Cys12, Cys48, Cys81, Cys162, Cys166, and Cys169. Positions 148–378 (STNSGYAYLK…MQLQKEIVQR (231 aa)) constitute a Radical SAM core domain. The region spanning 381–449 (ESRLEKVYKT…DYDLIGEVIN (69 aa)) is the TRAM domain.

It belongs to the methylthiotransferase family. RimO subfamily. The cofactor is [4Fe-4S] cluster.

The protein resides in the cytoplasm. It catalyses the reaction L-aspartate(89)-[ribosomal protein uS12]-hydrogen + (sulfur carrier)-SH + AH2 + 2 S-adenosyl-L-methionine = 3-methylsulfanyl-L-aspartate(89)-[ribosomal protein uS12]-hydrogen + (sulfur carrier)-H + 5'-deoxyadenosine + L-methionine + A + S-adenosyl-L-homocysteine + 2 H(+). Its function is as follows. Catalyzes the methylthiolation of an aspartic acid residue of ribosomal protein uS12. In Acetivibrio thermocellus (strain ATCC 27405 / DSM 1237 / JCM 9322 / NBRC 103400 / NCIMB 10682 / NRRL B-4536 / VPI 7372) (Clostridium thermocellum), this protein is Ribosomal protein uS12 methylthiotransferase RimO.